A 323-amino-acid chain; its full sequence is Fructose-1,6-bisphosphatase class 1 (323 aa).

4 residues coordinate Mg(2+): Glu88, Asp107, Leu109, and Asp110. Substrate-binding positions include Asp110–Ser113 and Asn200. Residue Glu272 coordinates Mg(2+).

This sequence belongs to the FBPase class 1 family. In terms of assembly, homotetramer. The cofactor is Mg(2+).

It is found in the cytoplasm. The enzyme catalyses beta-D-fructose 1,6-bisphosphate + H2O = beta-D-fructose 6-phosphate + phosphate. It functions in the pathway carbohydrate biosynthesis; gluconeogenesis. This Acinetobacter baumannii (strain ATCC 17978 / DSM 105126 / CIP 53.77 / LMG 1025 / NCDC KC755 / 5377) protein is Fructose-1,6-bisphosphatase class 1.